The primary structure comprises 356 residues: Protein ATP1B4 (356 aa).

Residues 1-109 are Nuclear-facing; sequence MRRQLRSRRA…SLARTGQSRS (109 aa). The interval 26-78 is disordered; that stretch reads EANHNYLADEEEEAEEEAQVMMVPGLEEEEEEEEGKEEEEEREEEEGQGQSTG. Composition is skewed to acidic residues over residues 33–43 and 51–72; these read ADEEEEAEEEA and LEEE…EEEG. Residues 110–130 traverse the membrane as a helical; Signal-anchor for type II membrane protein segment; that stretch reads LILVIYFFFYASLAAVITLFI. Residues 131 to 356 are Perinuclear space-facing; sequence YMLFLAISPY…RIIFTLNIET (226 aa).

Belongs to the X(+)/potassium ATPases subunit beta family. As to quaternary structure, associates with a SMAD7-transcriptional complex. Interacts with TOR1AIP1. Does not associate with known Na,K-ATPase alpha-subunits. Interacts with SNW1. Expressed in skeletal muscle (at protein level). Expressed during postnatal development in skeletal muscle and heart.

The protein localises to the nucleus inner membrane. Functionally, may act as a transcriptional coregulator during muscle development through its interaction with SNW1. Has lost its ancestral function as a Na,K-ATPase beta-subunit. The polypeptide is Protein ATP1B4 (Atp1b4) (Mus musculus (Mouse)).